The primary structure comprises 218 residues: Chymotrypsin-2 (218 aa).

The Peptidase S1 domain maps to 1 to 218 (IVGGTDAPRG…FLDWIQKNQL (218 aa)). A disulfide bridge connects residues C25 and C40. Catalysis depends on charge relay system residues H39 and D84. 2 disulfides stabilise this stretch: C148–C161 and C171–C195. Catalysis depends on S175, which acts as the Charge relay system.

It belongs to the peptidase S1 family.

The protein localises to the secreted. It is found in the extracellular space. The catalysed reaction is Preferential cleavage: Tyr-|-Xaa, Trp-|-Xaa, Phe-|-Xaa, Leu-|-Xaa.. The protein is Chymotrypsin-2 of Vespa crabro (European hornet).